The primary structure comprises 97 residues: Co-chaperonin GroES (97 aa).

This sequence belongs to the GroES chaperonin family. As to quaternary structure, heptamer of 7 subunits arranged in a ring. Interacts with the chaperonin GroEL.

It is found in the cytoplasm. Together with the chaperonin GroEL, plays an essential role in assisting protein folding. The GroEL-GroES system forms a nano-cage that allows encapsulation of the non-native substrate proteins and provides a physical environment optimized to promote and accelerate protein folding. GroES binds to the apical surface of the GroEL ring, thereby capping the opening of the GroEL channel. In Ectopseudomonas mendocina (strain ymp) (Pseudomonas mendocina), this protein is Co-chaperonin GroES.